The chain runs to 254 residues: 4-hydroxy-tetrahydrodipicolinate reductase (254 aa).

Residues 8-13 (GCSGKM), D35, 86-88 (CST), and 110-113 (SANM) each bind NAD(+). H143 acts as the Proton donor/acceptor in catalysis. H144 is a binding site for (S)-2,3,4,5-tetrahydrodipicolinate. K147 acts as the Proton donor in catalysis. 153–154 (GT) lines the (S)-2,3,4,5-tetrahydrodipicolinate pocket.

Belongs to the DapB family.

The protein resides in the cytoplasm. The enzyme catalyses (S)-2,3,4,5-tetrahydrodipicolinate + NAD(+) + H2O = (2S,4S)-4-hydroxy-2,3,4,5-tetrahydrodipicolinate + NADH + H(+). The catalysed reaction is (S)-2,3,4,5-tetrahydrodipicolinate + NADP(+) + H2O = (2S,4S)-4-hydroxy-2,3,4,5-tetrahydrodipicolinate + NADPH + H(+). The protein operates within amino-acid biosynthesis; L-lysine biosynthesis via DAP pathway; (S)-tetrahydrodipicolinate from L-aspartate: step 4/4. Catalyzes the conversion of 4-hydroxy-tetrahydrodipicolinate (HTPA) to tetrahydrodipicolinate. The protein is 4-hydroxy-tetrahydrodipicolinate reductase of Clostridium perfringens (strain 13 / Type A).